A 123-amino-acid chain; its full sequence is UPF0102 protein Cbei_1183 (123 aa).

The protein belongs to the UPF0102 family.

This chain is UPF0102 protein Cbei_1183, found in Clostridium beijerinckii (strain ATCC 51743 / NCIMB 8052) (Clostridium acetobutylicum).